Consider the following 354-residue polypeptide: Histidinol-phosphate aminotransferase 1 (354 aa).

Lysine 209 bears the N6-(pyridoxal phosphate)lysine mark.

The protein belongs to the class-II pyridoxal-phosphate-dependent aminotransferase family. Histidinol-phosphate aminotransferase subfamily. In terms of assembly, homodimer. Requires pyridoxal 5'-phosphate as cofactor.

The enzyme catalyses L-histidinol phosphate + 2-oxoglutarate = 3-(imidazol-4-yl)-2-oxopropyl phosphate + L-glutamate. The protein operates within amino-acid biosynthesis; L-histidine biosynthesis; L-histidine from 5-phospho-alpha-D-ribose 1-diphosphate: step 7/9. This Oceanobacillus iheyensis (strain DSM 14371 / CIP 107618 / JCM 11309 / KCTC 3954 / HTE831) protein is Histidinol-phosphate aminotransferase 1 (hisC1).